Reading from the N-terminus, the 190-residue chain is Small ribosomal subunit protein uS4c (190 aa).

The S4 RNA-binding domain maps to 92-152 (RLDHVVYRAG…KSPSSAQLPP (61 aa)).

The protein belongs to the universal ribosomal protein uS4 family. As to quaternary structure, part of the 30S ribosomal subunit. Contacts protein S5. The interaction surface between S4 and S5 is involved in control of translational fidelity.

It localises to the plastid. The protein resides in the chloroplast. Functionally, one of the primary rRNA binding proteins, it binds directly to 16S rRNA where it nucleates assembly of the body of the 30S subunit. With S5 and S12 plays an important role in translational accuracy. This is Small ribosomal subunit protein uS4c (rps4) from Cyanidioschyzon merolae (strain NIES-3377 / 10D) (Unicellular red alga).